Consider the following 196-residue polypeptide: Calcium channel flower (196 aa).

The next 3 membrane-spanning stretches (helical) occupy residues 36-56, 67-89, and 114-134; these read LGIVAAFFAILFGLWNVLSII, IIQMLAGFVVMALEAPCCFICIE, and AVPPIFMCFGLASLFGSGLIF.

This sequence belongs to the calcium channel flower family. Homomultimer. Associates with the dally/ magu complex.

The protein resides in the cell membrane. The protein localises to the cytoplasmic vesicle. It is found in the secretory vesicle. It localises to the synaptic vesicle membrane. Its subcellular location is the presynaptic cell membrane. The protein resides in the endosome. Channel activity is inhibited by La(3+), which reduces Ca(2+) influx and thus inhibits it's function in promoting activity-dependent bulk endocytosis (ADBE) in response to high stimuli. Its function is as follows. Transmembrane protein which mediates synaptic endocytosis, fitness-based cell culling, neuronal culling, morphogen gradient scaling, and calcium transport. Regulates synaptic endocytosis and hence couples exo- with endocytosis. Controls two major modes of synaptic vesicle (SV) endocytosis in the synaptic boutons of neuromuscular junctions (NMJs); Ca(2+) channel-independent Clathrin-mediated endocytosis (CME) in response to mild stimulation, and Ca(2+) channel-dependent activity-dependent bulk endocytosis (ADBE) in response to strong stimulation. Functions in ADBE and subsequent SV reformation from bulk endosomes by initiating Ca(2+) channel-dependent phosphatidylinositol 4,5-bisphosphate (PtdIns(4,5)P2) compartmentalization in synaptic boutons. There it acts at the periactive zone to provide the low Ca(2+) levels required to initiate Calcineurin activation and upregulate PtdIns(4,5)P2. Conversely PtdIns(4,5)P2 enhances fwe Ca(2+) channel-activity, establishing a positive feedback loop that induces PtdIns(4,5)P2 microdomain at the periactive zone. These microdomains trigger bulk membrane invagination (i.e. ADBE) by triggering actin polymerization while also promoting localization of fwe to bulk endosomes, thereby removing the ADBE trigger to reduce endocytosis and prevent excess membrane uptake. PtdIns(4,5)P2 then promotes SV reformation from the bulk endosomes, to coordinate ADBE and subsequent SV reformation. Different combinations of the flower isoforms at the cell membrane are also required for the identification and elimination of suboptimal or supernumerary cells during development, regeneration, and adulthood. Required for the recognition and elimination of unfit cells in the developing wing during cell competition. In the developing pupal retina, mediates the elimination of unwanted postmitotic neurons, including supernumerary photoreceptor neurons that form at the periphery of the retina and are contained within incomplete ommatidia units. Also required for efficient elimination and replacement of old neurons by newly generated neurons during regeneration in the adult brain following mechanical injury. Downstream of the flower fitness fingerprints, cells identified as unwanted or unfit are eliminated via apoptosis through the expression of ahuizotl (azot). However, the cells marked for elimination by the flower isoforms only undergo apoptosis if additional thresholds are met; (1) their neighboring fit/healthy cells express different levels of the fwe isoforms, and (2) the levels of the protective signal SPARC expressed by the loser or unwanted cells are unable to inhibit caspase activation. These additional thresholds for flower-mediated apoptosis, allows useful cells to recover from transient and limited stress before they are unnecessarily eliminated. Functions with dally and magu in a mechanism of scaling, which utilises apoptosis to ensure that the dpp morphogen gradient, which mediates organ growth, remains proportional to the size of the growing wing. In this mechanism, fwe represses dally- and Magu-dependent activity in expanding the gradient, and dally/Magu inhibits fwe-dependent apoptosis to keep cell death rate low. When the levels of these different proteins are optimally regulated the gradient correctly scales with organ growth but when this fails, fwe-mediated apoptosis is activated to trim the developing tissue to match the correct size of the gradient. This is Calcium channel flower from Drosophila virilis (Fruit fly).